The sequence spans 69 residues: Conotoxin Eb6.21 (69 aa).

The first 17 residues, 1 to 17, serve as a signal peptide directing secretion; sequence VLIIAVLFLTACQLTTA. Positions 18–41 are excised as a propeptide; it reads ETYSRGRQKHRARRSTDKNSKWTR. 3 disulfides stabilise this stretch: cysteine 43/cysteine 57, cysteine 50/cysteine 61, and cysteine 56/cysteine 68.

The protein belongs to the conotoxin O1 superfamily. In terms of tissue distribution, expressed by the venom duct.

Its subcellular location is the secreted. The sequence is that of Conotoxin Eb6.21 (E1) from Conus ebraeus (Hebrew cone).